We begin with the raw amino-acid sequence, 179 residues long: Large ribosomal subunit protein uL5 (179 aa).

The protein belongs to the universal ribosomal protein uL5 family. In terms of assembly, part of the 50S ribosomal subunit; part of the 5S rRNA/L5/L18/L25 subcomplex. Contacts the 5S rRNA and the P site tRNA. Forms a bridge to the 30S subunit in the 70S ribosome.

Functionally, this is one of the proteins that bind and probably mediate the attachment of the 5S RNA into the large ribosomal subunit, where it forms part of the central protuberance. In the 70S ribosome it contacts protein S13 of the 30S subunit (bridge B1b), connecting the 2 subunits; this bridge is implicated in subunit movement. Contacts the P site tRNA; the 5S rRNA and some of its associated proteins might help stabilize positioning of ribosome-bound tRNAs. The protein is Large ribosomal subunit protein uL5 of Bacillus cereus (strain 03BB102).